The following is a 179-amino-acid chain: Segregation and condensation protein B (179 aa).

It belongs to the ScpB family. As to quaternary structure, homodimer. Homodimerization may be required to stabilize the binding of ScpA to the Smc head domains. Component of a cohesin-like complex composed of ScpA, ScpB and the Smc homodimer, in which ScpA and ScpB bind to the head domain of Smc. The presence of the three proteins is required for the association of the complex with DNA.

The protein resides in the cytoplasm. Functionally, participates in chromosomal partition during cell division. May act via the formation of a condensin-like complex containing Smc and ScpA that pull DNA away from mid-cell into both cell halves. The chain is Segregation and condensation protein B from Streptococcus equi subsp. zooepidemicus (strain H70).